The sequence spans 61 residues: Metallothionein-1A (61 aa).

An N-acetylmethionine modification is found at Met1. Residues 1-29 (MDPNCSCATGGSCTCTGSCKCKECKCTSC) form a beta region. Positions 5, 7, 13, 15, 19, 21, 24, 26, 29, 33, 34, 36, 37, 41, 44, 48, 50, and 57 each coordinate a divalent metal cation. The interval 30 to 61 (KKSCCSCCPMSCAKCAQGCICKGASEKCSCCA) is alpha. Residue Ser58 is modified to Phosphoserine. Residues Cys59 and Cys60 each contribute to the a divalent metal cation site.

Belongs to the metallothionein superfamily. Type 1 family. As to quaternary structure, monomer.

Its function is as follows. Metallothioneins have a high content of cysteine residues that bind various heavy metals; these proteins are transcriptionally regulated by both heavy metals and glucocorticoids. The polypeptide is Metallothionein-1A (MT1A) (Homo sapiens (Human)).